We begin with the raw amino-acid sequence, 376 residues long: uncharacterized protein (376 aa).

S59 is subject to Phosphoserine. In terms of domain architecture, Rho-GAP spans 139-367 (VAIEITVQRQ…CLIEHHNAIF (229 aa)). The interval 307 to 338 (RPSRSPKKSNDFETATPWDLLSDEGEGPDASS) is disordered.

This is an uncharacterized protein from Arabidopsis thaliana (Mouse-ear cress).